The primary structure comprises 2327 residues: MDDTNSNINQSNESQHLEEKAKKWIQLNNKKYSEKRKFGAVEIRKEDMPPEHLRKIIKDHGDMSNRRFRDDKRVYLGALKYMPHAILKLLENIPMPWEQVKYVKVLYHLSGAITFVNEIPFVIEPIYIAQWATMWVTMRREKRDRTHFRRMKFPLFDDEEPPLDYSDNILDNEVEDPIQMELDENDDSEVIDWLYDSKPLVNTKFVNGSSYRKWRLNLPIMSTLFRLASPLLSDLTDSNYFYLFDDNSFFTSKALNMAIPGGPKFEPLFRDVDDDDEDWNEFNDINKVIIRNKIRTEYKIAFPYLYNSRPRKVKTPTYHTPNNCYIKNDSPDLPGFYFGAALNPIPSYKTSGNKNEQSEYGTEDDEFQLPEEIETILSKTEIEHDNLANGIQLYWAPRPFSLRSGTTRRAEDIPLVKSWYKEHCPSEHPVKVRVSYQKLLKCHVLNKLHHRKPKAQTKRNLFKSLKATKFFQSTEIDWVEAGLQVCRQGYNMLNLLIHRKNLNYLHLDYNFYLKPIKTLTTKERKKSRFGNAFHLCREILRLTKLVVDVHVKFRLGDADAFQLADAIQYLFSHLGLLTGMYKYKYRLMRQIRMCKDLKHLIYYRFNTGAVGKGPGCGFWAPMWRVWLFFLRGIVPLLERWLGNLLARQFEGRQTKGMAKTVTKQRVESHFDYELRAAVMHDILDMMPEGIKANKSRIILQHLSEAWRCWKSNIPWKVPGLPIPIENMILRYVKSKADWWTNIAHYNRERIKRGATIDKTASKKNLGRLTRLWLKAEQERQHNYLKDGPYVSAEEAVAIYTTTVHWLEKRRFSAIPFPQTSYKHDIKILTLALERLKEAYSVKSRLNQSQREELSLVEQAYDNPHDALARIKRHLLTQRTFKEVGIEFMDMYTHLVPIYDVDPFEKITDAYLDQYLWYEADKRQLFPNWVKPSDNEPPPVLIHKWCQGINNLDQVWETSQGECVVLLETQFSKVYEKMDLTLMNRLLRLIVDQNIADYMSGKNNVVINYKDMNHTNSYGLIRGLQFASFIFQYYGLVLDLLVLGLERASALAGPPNLPNSFLTFPSVQTETAHPIRLYSRYVDRIHVLYKFTADEARKLIQKYMSEHPDPNNENVVGYNNKKCWPRDCRMRLMKHDVNLGRAVFWQIKNRLPRSLTTIDWEDSFVSVYSKDNPNLLMNMAGFDIRILPKCRTPLDQLAPKDAVWSLQNVNTKERTAQAFLRVDTESQERFENRIRMILMASGSTTFTKIVNKWNTALIGLMTYYREAVVTTREMLDILVRCENKIQTRVKIGLNSKMPNRFPPVVFYTPKELGGLGMLSMGHVLIPQSDLKYSKQTDTGITHFTSGMSHDEDQLIPNLYRYIQPWEQEIKDSQRVWAEYAIKYEEAKSQNKNLTLEDLEDSWDRGIPRINTLFQKSRHTLAYDKGWRVRTDWKQYQVLKNNPFWWTNQRHDGKLWNLNNYRTDIIQALGGVEGILEHTLFKGTYFPTWEGLFWEKASGFEESMKYKKLTHAQRSGLNQIPNRRFTLWWSPTINRKNVYVGFQVQLDLTGIFMHGKIPTLKISLIQIFRAHLWQKIHESLVMDLCQVFDQELDNLEISVVNKEAIHPRKSYKMNSSCADILLRATHKWQVSRPSLLNDNRDTYDNTTTQYWLDVQLKWGDFDSHDIERYSRAKFLDYTTDSMSLYPSPTGCLIGLDLAYNIYSSFGNWFLGVKPLVQKAMAKILKSNPALYVLRERIRKGLQLYSSEPTEPYLSSQNFGELFSNKIMWFVDDSNVYRVTIHKTFEGNLTTKPINGAIFIFNPRTGQLFLKIIHTDVWLGQKRLGQLAKWKTAEEVAALIRSLPVEEQPKQIIATRKGMMDPLEVHLLDFPNIVIQGSELQLPFQACLKVEKFGDLILKATEPKMVLFNIYDDWLSTIHSYTAFLRLILILRALHVNLERTKIILKPNKNVITQPHHIWPTLTEQEWLTVEGSLKDLILADFGKRNNVNVASLTQSEIRDIILGMEISAPSQQREDQIAEIEKQKTEASHLTAVTVRSTNIHGEEIITTATSPHEQKVFSSKTDWRVRAISATNLHLRTNQIYVNSDNAKETGGFTYVFPKNILKKFITIADLRTQIMGYCYGISPPDNPSVKEIRCIVMPPQWGTPVHVTVPNQLPEHEYLKDLEPLGWIHTQPTELPQLSPQDVITHSKIMSDNKSWDGEKTVIISVSVAWPCTLTAYHLTPSGFEWGKNNKDSLNYQGYQPQFYEKVQMLLSDRFLGFYMVPDRGSWNYNFMGVKHSTNMTYGLKLDYPKNFYDESHRPAHFQNWTQMAPSANDDEENQPENENLFE.

Over residues 1 to 14 (MDDTNSNINQSNES) the composition is skewed to polar residues. Residues 1-20 (MDDTNSNINQSNESQHLEEK) are disordered. The reverse transcriptase homology domain stretch occupies residues 801-1292 (TTVHWLEKRR…KIQTRVKIGL (492 aa)). The tract at residues 1293-1566 (NSKMPNRFPP…TLKISLIQIF (274 aa)) is linker. The tract at residues 1502-1515 (MKYKKLTHAQRSGL) is important for branch point selection. The interval 1570–1740 (LWQKIHESLV…LRERIRKGLQ (171 aa)) is restriction endonuclease homology domain. An involved in interaction with pre-mRNA 5' splice site region spans residues 1657 to 2023 (GDFDSHDIER…QIAEIEKQKT (367 aa)). The segment at 1755-2008 (NFGELFSNKI…ILGMEISAPS (254 aa)) is RNase H homology domain. The 131-residue stretch at 2093–2223 (TYVFPKNILK…LTAYHLTPSG (131 aa)) folds into the MPN domain.

In terms of assembly, part of the U5 snRNP complex and of the U4/U6-U5 tri-snRNP complex.

Its subcellular location is the nucleus speckle. In terms of biological role, functions as a scaffold that mediates the ordered assembly of spliceosomal proteins and snRNAs. Required for the assembly of the U4/U6-U5 tri-snRNP complex. Functions as a scaffold that positions spliceosomal U2, U5 and U6 snRNAs at splice sites on pre-mRNA substrates, so that splicing can occur. Interacts with both the 5' and the 3' splice site. The sequence is that of Pre-mRNA-processing-splicing factor 8 homolog (prpf8) from Dictyostelium discoideum (Social amoeba).